A 1387-amino-acid polypeptide reads, in one-letter code: Magnesium-chelatase subunit ChlH, chloroplastic (1387 aa).

The transit peptide at 1–50 (MSSLVSTPFTTATGVQKKLGAPVPLHSFLLSRRQPAAGAGRGRAAAAAIR) directs the protein to the chloroplast.

It belongs to the Mg-chelatase subunit H family. In terms of assembly, the magnesium chelatase complex is a heterotrimer consisting of subunits CHLI, CHLD and CHLH.

It localises to the plastid. Its subcellular location is the chloroplast stroma. It is found in the chloroplast membrane. The catalysed reaction is protoporphyrin IX + Mg(2+) + ATP + H2O = Mg-protoporphyrin IX + ADP + phosphate + 3 H(+). The protein operates within porphyrin-containing compound metabolism; chlorophyll biosynthesis. In terms of biological role, involved in chlorophyll biosynthesis. Catalyzes the insertion of magnesium ion into protoporphyrin IX to yield Mg-protoporphyrin IX. The reaction takes place in two steps, with an ATP-dependent activation followed by an ATP-dependent chelation step. May be involved in the plastid-to-nucleus retrograde signaling. This is Magnesium-chelatase subunit ChlH, chloroplastic (CHLH) from Oryza sativa subsp. japonica (Rice).